The primary structure comprises 279 residues: Large ribosomal subunit protein uL2 (279 aa).

The segment at 223-279 (VVMNPVDHPHGGGEGRTSGGRHPVTPWGKPTKGKRTRSNKKTDSLIMRSRHLAKKKR) is disordered. Residues 270–279 (RSRHLAKKKR) are compositionally biased toward basic residues.

It belongs to the universal ribosomal protein uL2 family. As to quaternary structure, part of the 50S ribosomal subunit. Forms a bridge to the 30S subunit in the 70S ribosome.

One of the primary rRNA binding proteins. Required for association of the 30S and 50S subunits to form the 70S ribosome, for tRNA binding and peptide bond formation. It has been suggested to have peptidyltransferase activity; this is somewhat controversial. Makes several contacts with the 16S rRNA in the 70S ribosome. This chain is Large ribosomal subunit protein uL2, found in Rhodospirillum rubrum (strain ATCC 11170 / ATH 1.1.1 / DSM 467 / LMG 4362 / NCIMB 8255 / S1).